Consider the following 212-residue polypeptide: Glutathione S-transferase (212 aa).

The 82-residue stretch at 1-82 folds into the GST N-terminal domain; sequence MGMKLHGPAM…YIAHTYADKG (82 aa). Residues Ser-11, 12–13, 40–41, 53–54, and 66–67 contribute to the glutathione site; these read PA, HK, QV, and ES. A GST C-terminal domain is found at 89 to 212; sequence DPKKMAIMSV…AWSKAIEYKQ (124 aa).

This sequence belongs to the GST superfamily. Phi family.

It carries out the reaction RX + glutathione = an S-substituted glutathione + a halide anion + H(+). Functionally, conjugation of reduced glutathione to a wide number of exogenous and endogenous hydrophobic electrophiles. The chain is Glutathione S-transferase from Hyoscyamus muticus (Egyptian henbane).